Reading from the N-terminus, the 147-residue chain is ATP synthase subunit 9, mitochondrial (147 aa).

The N-terminal 66 residues, 1-66 (MASTRVLASR…TTRQAFQKRA (66 aa)), are a transit peptide targeting the mitochondrion. The next 2 membrane-spanning stretches (helical) occupy residues 86-106 (SAAI…AALL) and 123-143 (AILG…VALM).

It belongs to the ATPase C chain family. F-type ATPases have 2 components, CF(1) - the catalytic core - and CF(0) - the membrane proton channel. CF(1) has five subunits: alpha(3), beta(3), gamma(1), delta(1), epsilon(1). CF(0) has three main subunits: a, b and c.

The protein resides in the mitochondrion membrane. In terms of biological role, mitochondrial membrane ATP synthase (F(1)F(0) ATP synthase or Complex V) produces ATP from ADP in the presence of a proton gradient across the membrane which is generated by electron transport complexes of the respiratory chain. F-type ATPases consist of two structural domains, F(1) - containing the extramembraneous catalytic core and F(0) - containing the membrane proton channel, linked together by a central stalk and a peripheral stalk. During catalysis, ATP synthesis in the catalytic domain of F(1) is coupled via a rotary mechanism of the central stalk subunits to proton translocation. Part of the complex F(0) domain. A homomeric c-ring of probably 10 subunits is part of the complex rotary element. The polypeptide is ATP synthase subunit 9, mitochondrial (oli) (Neurospora crassa (strain ATCC 24698 / 74-OR23-1A / CBS 708.71 / DSM 1257 / FGSC 987)).